Here is a 637-residue protein sequence, read N- to C-terminus: Chaperone protein HtpG (637 aa).

Residues 1-334 (MQDVVNSEKL…SSDLPLNISR (334 aa)) are a; substrate-binding. The segment at 335–558 (ETLQNNKVIE…DGSMDIRMER (224 aa)) is b. The tract at residues 559–637 (FLREQKQLNY…MNNVLVKVYQ (79 aa)) is c.

The protein belongs to the heat shock protein 90 family. As to quaternary structure, homodimer.

It is found in the cytoplasm. Molecular chaperone. Has ATPase activity. This is Chaperone protein HtpG from Ehrlichia canis (strain Jake).